We begin with the raw amino-acid sequence, 313 residues long: N-acetyl-gamma-glutamyl-phosphate reductase 2 (313 aa).

Cysteine 117 is an active-site residue.

The protein belongs to the NAGSA dehydrogenase family. Type 2 subfamily.

Its subcellular location is the cytoplasm. The enzyme catalyses N-acetyl-L-glutamate 5-semialdehyde + phosphate + NADP(+) = N-acetyl-L-glutamyl 5-phosphate + NADPH + H(+). Its pathway is amino-acid biosynthesis; L-arginine biosynthesis; N(2)-acetyl-L-ornithine from L-glutamate: step 3/4. Its function is as follows. Catalyzes the NADPH-dependent reduction of N-acetyl-5-glutamyl phosphate to yield N-acetyl-L-glutamate 5-semialdehyde. The protein is N-acetyl-gamma-glutamyl-phosphate reductase 2 of Pseudomonas putida (strain ATCC 47054 / DSM 6125 / CFBP 8728 / NCIMB 11950 / KT2440).